A 173-amino-acid polypeptide reads, in one-letter code: Superoxide dismutase [Cu-Zn] (173 aa).

The signal sequence occupies residues 1 to 19; sequence MKSLFIASTMVLMAFPAFA. Cu cation contacts are provided by His67, His69, and His92. Cys74 and Cys169 are oxidised to a cystine. Residues His92, His101, His109, and Asp112 each contribute to the Zn(2+) site. Residue His147 participates in Cu cation binding.

It belongs to the Cu-Zn superoxide dismutase family. As to quaternary structure, homodimer. It depends on Cu cation as a cofactor. The cofactor is Zn(2+).

The protein resides in the periplasm. It carries out the reaction 2 superoxide + 2 H(+) = H2O2 + O2. In terms of biological role, destroys radicals which are normally produced within the cells and which are toxic to biological systems. This is Superoxide dismutase [Cu-Zn] (sodC) from Brucella abortus biovar 1 (strain 9-941).